The sequence spans 161 residues: Cyclic pyranopterin monophosphate synthase (161 aa).

Residues 73–75 and 110–111 each bind substrate; these read LCH and ME. Residue Asp125 is part of the active site.

It belongs to the MoaC family. Homohexamer; trimer of dimers.

The catalysed reaction is (8S)-3',8-cyclo-7,8-dihydroguanosine 5'-triphosphate = cyclic pyranopterin phosphate + diphosphate. The protein operates within cofactor biosynthesis; molybdopterin biosynthesis. Its function is as follows. Catalyzes the conversion of (8S)-3',8-cyclo-7,8-dihydroguanosine 5'-triphosphate to cyclic pyranopterin monophosphate (cPMP). This chain is Cyclic pyranopterin monophosphate synthase, found in Pseudomonas syringae pv. syringae (strain B728a).